The following is a 372-amino-acid chain: Spermidine/putrescine import ATP-binding protein PotA (372 aa).

Positions 13–243 (IKLTGISKSF…PKNLFVARFI (231 aa)) constitute an ABC transporter domain. 45 to 52 (GPSGCGKT) is a binding site for ATP.

It belongs to the ABC transporter superfamily. Spermidine/putrescine importer (TC 3.A.1.11.1) family. The complex is composed of two ATP-binding proteins (PotA), two transmembrane proteins (PotB and PotC) and a solute-binding protein (PotD).

It is found in the cell inner membrane. It catalyses the reaction ATP + H2O + polyamine-[polyamine-binding protein]Side 1 = ADP + phosphate + polyamineSide 2 + [polyamine-binding protein]Side 1.. In terms of biological role, part of the ABC transporter complex PotABCD involved in spermidine/putrescine import. Responsible for energy coupling to the transport system. This Aliivibrio fischeri (strain ATCC 700601 / ES114) (Vibrio fischeri) protein is Spermidine/putrescine import ATP-binding protein PotA.